The sequence spans 426 residues: Glutamate-1-semialdehyde 2,1-aminomutase (426 aa).

Position 265 is an N6-(pyridoxal phosphate)lysine (lysine 265).

It belongs to the class-III pyridoxal-phosphate-dependent aminotransferase family. HemL subfamily. As to quaternary structure, homodimer. Pyridoxal 5'-phosphate is required as a cofactor.

It localises to the cytoplasm. The catalysed reaction is (S)-4-amino-5-oxopentanoate = 5-aminolevulinate. It functions in the pathway porphyrin-containing compound metabolism; protoporphyrin-IX biosynthesis; 5-aminolevulinate from L-glutamyl-tRNA(Glu): step 2/2. This chain is Glutamate-1-semialdehyde 2,1-aminomutase, found in Cronobacter sakazakii (strain ATCC BAA-894) (Enterobacter sakazakii).